The following is a 296-amino-acid chain: Glycine--tRNA ligase alpha subunit (296 aa).

Belongs to the class-II aminoacyl-tRNA synthetase family. As to quaternary structure, tetramer of two alpha and two beta subunits.

It is found in the cytoplasm. It catalyses the reaction tRNA(Gly) + glycine + ATP = glycyl-tRNA(Gly) + AMP + diphosphate. This chain is Glycine--tRNA ligase alpha subunit, found in Parasynechococcus marenigrum (strain WH8102).